Consider the following 503-residue polypeptide: Zinc metalloproteinase nas-14 (503 aa).

The N-terminal stretch at 1–25 is a signal peptide; the sequence is MRLLYSLFHCSAFLVGFTLSVGVLP. In terms of domain architecture, Peptidase M12A spans 116 to 312; sequence NLVTYPDKLW…KKVNKLYQCG (197 aa). Intrachain disulfides connect cysteine 158–cysteine 311 and cysteine 182–cysteine 202. Asparagine 192 carries N-linked (GlcNAc...) asparagine glycosylation. Histidine 210 lines the Zn(2+) pocket. The active site involves glutamate 211. Residues histidine 214 and histidine 220 each contribute to the Zn(2+) site. Low complexity predominate over residues 317–340; the sequence is TSSTTTTTTTTTTTTTTEEPTTTT. A disordered region spans residues 317–377; that stretch reads TSSTTTTTTT…TPKPVERSRN (61 aa). Positions 342 to 351 are enriched in basic and acidic residues; it reads VEEKPKDKKV. The span at 352–370 shows a compositional bias: low complexity; sequence SSTTTTTKKPTTTTTTTPK. 3 cysteine pairs are disulfide-bonded: cysteine 380–cysteine 414, cysteine 387–cysteine 407, and cysteine 396–cysteine 411. A ShKT 1 domain is found at 380–414; it reads CEDLNAHCGMWEQLGHCQHSVKYMAHYCRKACNLC. Residues 422 to 464 form a disordered region; that stretch reads TTTTPKPVPRNKEKENKSASSTTRGTSTATSTTPKTTTTTTSA. Asparagine 437 carries an N-linked (GlcNAc...) asparagine glycan. Residues 439–464 show a composition bias toward low complexity; the sequence is SASSTTRGTSTATSTTPKTTTTTTSA. Intrachain disulfides connect cysteine 469-cysteine 503, cysteine 476-cysteine 496, and cysteine 485-cysteine 500. A ShKT 2 domain is found at 469-503; it reads CEDKNLFCSYWAKIGECNSESKFMKIFCKASCGKC.

It depends on Zn(2+) as a cofactor. As to expression, expressed in pharyngeal muscles and mc cells.

It localises to the secreted. Metalloprotease. This chain is Zinc metalloproteinase nas-14 (nas-14), found in Caenorhabditis elegans.